A 1366-amino-acid polypeptide reads, in one-letter code: DNA-directed RNA polymerase subunit beta (1366 aa).

Belongs to the RNA polymerase beta chain family. In terms of assembly, the RNAP catalytic core consists of 2 alpha, 1 beta, 1 beta' and 1 omega subunit. When a sigma factor is associated with the core the holoenzyme is formed, which can initiate transcription.

It catalyses the reaction RNA(n) + a ribonucleoside 5'-triphosphate = RNA(n+1) + diphosphate. Functionally, DNA-dependent RNA polymerase catalyzes the transcription of DNA into RNA using the four ribonucleoside triphosphates as substrates. The chain is DNA-directed RNA polymerase subunit beta from Polynucleobacter necessarius subsp. necessarius (strain STIR1).